The sequence spans 323 residues: MYHNSTQKKHWTFLSEDEPLRRRIQANVRYRARIRATEKPRLSEIFSLEPHEELAICKYYEKRLLDFCNAFKPTMPKSVLGTACMYFKRFYLNNSVMEHHPRIIMLTCVFLACKVDEFNVSSIQFVGNLGENPLGQEKILEQILEYELLLIQQLNFHLIVHNPYRPFEGFLIDVKTRYPMLENPEVLRKSADEFLNRVALTDACLLFAPSVIALTAILSTASRAGLNMESYLTECLSLKDNQETMSHLLDGMRRLKILVSKYEPARPEEVAALKKRLDHCHSTEVTLSVHGRKRKGYEDDGYISKKPKTEEDEWTDEDFGDSL.

The segment at 296–323 (GYEDDGYISKKPKTEEDEWTDEDFGDSL) is disordered. The span at 310-323 (EEDEWTDEDFGDSL) shows a compositional bias: acidic residues.

It belongs to the cyclin family. Cyclin C subfamily. As to quaternary structure, associates primarily with CDK7 and MAT1 to form the CAK complex. CAK can further associate with the core-TFIIH to form the TFIIH basal transcription factor.

Its subcellular location is the nucleus. Regulates CDK7, the catalytic subunit of the CDK-activating kinase (CAK) enzymatic complex. CAK activates the cyclin-associated kinases CDK1, CDK2, CDK4 and CDK6 by threonine phosphorylation. CAK complexed to the core-TFIIH basal transcription factor activates RNA polymerase II by serine phosphorylation of the repetitive C-terminal domain (CTD) of its large subunit (POLR2A), allowing its escape from the promoter and elongation of the transcripts. Involved in cell cycle control and in RNA transcription by RNA polymerase II. Its expression and activity are constant throughout the cell cycle. The chain is Cyclin-H (ccnh) from Xenopus laevis (African clawed frog).